Here is a 476-residue protein sequence, read N- to C-terminus: Light-independent protochlorophyllide reductase subunit N (476 aa).

[4Fe-4S] cluster-binding residues include cysteine 31, cysteine 56, and cysteine 116.

It belongs to the BchN/ChlN family. As to quaternary structure, protochlorophyllide reductase is composed of three subunits; ChlL, ChlN and ChlB. Forms a heterotetramer of two ChlB and two ChlN subunits. Requires [4Fe-4S] cluster as cofactor.

The protein localises to the plastid. The protein resides in the chloroplast. The catalysed reaction is chlorophyllide a + oxidized 2[4Fe-4S]-[ferredoxin] + 2 ADP + 2 phosphate = protochlorophyllide a + reduced 2[4Fe-4S]-[ferredoxin] + 2 ATP + 2 H2O. It functions in the pathway porphyrin-containing compound metabolism; chlorophyll biosynthesis (light-independent). Component of the dark-operative protochlorophyllide reductase (DPOR) that uses Mg-ATP and reduced ferredoxin to reduce ring D of protochlorophyllide (Pchlide) to form chlorophyllide a (Chlide). This reaction is light-independent. The NB-protein (ChlN-ChlB) is the catalytic component of the complex. In Staurastrum punctulatum (Green alga), this protein is Light-independent protochlorophyllide reductase subunit N.